We begin with the raw amino-acid sequence, 373 residues long: Glutamate 5-kinase (373 aa).

An ATP-binding site is contributed by Lys15. Positions 56, 143, and 155 each coordinate substrate. 175-176 lines the ATP pocket; it reads SD. Positions 281–358 constitute a PUA domain; sequence KGTLTIDAGA…PDVMTILGIS (78 aa).

It belongs to the glutamate 5-kinase family.

The protein resides in the cytoplasm. It carries out the reaction L-glutamate + ATP = L-glutamyl 5-phosphate + ADP. It participates in amino-acid biosynthesis; L-proline biosynthesis; L-glutamate 5-semialdehyde from L-glutamate: step 1/2. In terms of biological role, catalyzes the transfer of a phosphate group to glutamate to form L-glutamate 5-phosphate. This is Glutamate 5-kinase from Bradyrhizobium diazoefficiens (strain JCM 10833 / BCRC 13528 / IAM 13628 / NBRC 14792 / USDA 110).